The following is a 1002-amino-acid chain: Carboxypeptidase Y (1002 aa).

Positions M1–A18 are cleaved as a signal peptide. Residues Q19–G521 constitute a propeptide that is removed on maturation. Disordered regions lie at residues Q51–E91, D124–S436, and A527–S546. 2 stretches are compositionally biased toward basic and acidic residues: residues P63 to N81 and E127 to P143. Residues R144–H170 are compositionally biased toward basic residues. Residues P171–E205 show a composition bias toward basic and acidic residues. Tandem repeats lie at residues M225–P237, M238–P250, M251–P263, M264–P276, M277–P289, M290–P302, M303–P315, M316–P328, M329–P341, D361–K369, D370–K378, D379–K387, D388–K396, D397–K405, and D406–K414. A 9 X 13 AA tandem repeats of M-H-H-E-P-G-E-H-M-P-P-P-P region spans residues M225–P341. Basic and acidic residues predominate over residues K343–E431. Positions D361–K423 are 7 X 9 AA tandem repeats of D-K-E-H-H-K-G-P-K. One copy of the 2-7; approximate repeat lies at D415–K423. 5 cysteine pairs are disulfide-bonded: C627-C880, C776-C789, C799-C822, C806-C815, and C844-C851. Residue N659 is glycosylated (N-linked (GlcNAc...) asparagine). The active site involves S715. D921 is a catalytic residue. C924 serves as a coordination point for substrate. H978 is a catalytic residue. A substrate-binding site is contributed by M979.

It belongs to the peptidase S10 family. As to quaternary structure, heterodimer of two subunits of 32 kDa and 19 kDa derived from the precursor protein and linked by a disulfide bond.

The protein resides in the vacuole. It carries out the reaction Release of a C-terminal amino acid with broad specificity.. Its function is as follows. Involved in degradation of small peptides. Digests preferentially peptides containing an aliphatic or hydrophobic residue in P1' position, as well as methionine, leucine or phenylalanine in P1 position of ester substrate. The sequence is that of Carboxypeptidase Y (cpy1) from Schizosaccharomyces pombe (strain 972 / ATCC 24843) (Fission yeast).